The primary structure comprises 266 residues: Luciferase (266 aa).

A helical transmembrane segment spans residues G22 to I41.

This sequence belongs to the fungal luciferase family.

The protein localises to the membrane. The enzyme catalyses 3-hydroxyhispidin + O2 = (E)-caffeoylpyruvate + hnu + CO2. It catalyses the reaction 3-hydroxyhispidin + O2 = 4-[(E)-2-(3,4-dihydroxyphenyl)ethenyl]-1,7-dihydroxy-2,3,5-trioxabicyclo[2.2.2]oct-7-en-6-one. Luciferase; part of the gene cluster that mediates the fungal bioluminescence cycle. Uses the fungal luciferin 3-hydroxyhispidin as a substrate to produce an endoperoxide as a high-energy intermediate with decomposition that yields oxyluciferin (also known as caffeoylpyruvate) and light emission. The fungal bioluminescence cycle begins with the hispidin synthetase that catalyzes the formation of hispidin which is further hydroxylated by the hispidin-3-hydroxylase, yielding the fungal luciferin 3-hydroxyhispidin. The luciferase then produces an endoperoxide as a high-energy intermediate with decomposition that yields oxyluciferin and light emission. Oxyluciferin can be recycled to caffeic acid by caffeoylpyruvate hydrolase. In Armillaria gallica (Bulbous honey fungus), this protein is Luciferase.